We begin with the raw amino-acid sequence, 203 residues long: Holliday junction branch migration complex subunit RuvA (203 aa).

Residues 1–61 form a domain I region; the sequence is MIIYKYGKIM…EYTKVTYGFD (61 aa). Positions 62–139 are domain II; the sequence is NFKELVIFED…KFMKKLTSDE (78 aa). The interval 140–147 is flexible linker; that stretch reads AAKIKVPA. Residues 147–203 form a domain III region; it reads ASSENENKFLDTMKMLGFKQQQIKFALDKIELNDDIETCVENAIKLISQQQHETSRV.

Belongs to the RuvA family. In terms of assembly, homotetramer. Forms an RuvA(8)-RuvB(12)-Holliday junction (HJ) complex. HJ DNA is sandwiched between 2 RuvA tetramers; dsDNA enters through RuvA and exits via RuvB. An RuvB hexamer assembles on each DNA strand where it exits the tetramer. Each RuvB hexamer is contacted by two RuvA subunits (via domain III) on 2 adjacent RuvB subunits; this complex drives branch migration. In the full resolvosome a probable DNA-RuvA(4)-RuvB(12)-RuvC(2) complex forms which resolves the HJ.

It localises to the cytoplasm. The RuvA-RuvB-RuvC complex processes Holliday junction (HJ) DNA during genetic recombination and DNA repair, while the RuvA-RuvB complex plays an important role in the rescue of blocked DNA replication forks via replication fork reversal (RFR). RuvA specifically binds to HJ cruciform DNA, conferring on it an open structure. The RuvB hexamer acts as an ATP-dependent pump, pulling dsDNA into and through the RuvAB complex. HJ branch migration allows RuvC to scan DNA until it finds its consensus sequence, where it cleaves and resolves the cruciform DNA. The sequence is that of Holliday junction branch migration complex subunit RuvA from Metamycoplasma arthritidis (strain 158L3-1) (Mycoplasma arthritidis).